The following is a 137-amino-acid chain: Basic phospholipase A2 DsM-S1 (137 aa).

A signal peptide spans 1-16 (MRTLWIVAVCLIGVEG). 7 disulfides stabilise this stretch: Cys42–Cys131, Cys44–Cys60, Cys59–Cys111, Cys65–Cys137, Cys66–Cys104, Cys73–Cys97, and Cys91–Cys102. Positions 43, 45, and 47 each coordinate Ca(2+). The active site involves His63. Position 64 (Asp64) interacts with Ca(2+). Asp105 is an active-site residue.

Belongs to the phospholipase A2 family. Group II subfamily. D49 sub-subfamily. The cofactor is Ca(2+). In terms of tissue distribution, expressed by the venom gland.

It localises to the secreted. The enzyme catalyses a 1,2-diacyl-sn-glycero-3-phosphocholine + H2O = a 1-acyl-sn-glycero-3-phosphocholine + a fatty acid + H(+). Functionally, snake venom phospholipase A2 (PLA2) that is neurotoxic. PLA2 catalyzes the calcium-dependent hydrolysis of the 2-acyl groups in 3-sn-phosphoglycerides. The polypeptide is Basic phospholipase A2 DsM-S1 (Daboia siamensis (Eastern Russel's viper)).